A 295-amino-acid polypeptide reads, in one-letter code: Protoheme IX farnesyltransferase (295 aa).

A run of 9 helical transmembrane segments spans residues 7–27 (VTKP…FLLA), 34–54 (VPLF…GCVF), 78–98 (LIAP…GIAL), 106–126 (LAAL…SLYM), 131–151 (VYGT…GYCA), 161–181 (LILL…IAIF), 207–227 (ITLY…GGYA), 228–248 (GYKY…MALS), and 263–283 (LFMF…VDFQ).

The protein belongs to the UbiA prenyltransferase family. Protoheme IX farnesyltransferase subfamily.

Its subcellular location is the cell inner membrane. It catalyses the reaction heme b + (2E,6E)-farnesyl diphosphate + H2O = Fe(II)-heme o + diphosphate. Its pathway is porphyrin-containing compound metabolism; heme O biosynthesis; heme O from protoheme: step 1/1. Converts heme B (protoheme IX) to heme O by substitution of the vinyl group on carbon 2 of heme B porphyrin ring with a hydroxyethyl farnesyl side group. In Aeromonas salmonicida (strain A449), this protein is Protoheme IX farnesyltransferase.